Consider the following 529-residue polypeptide: Bifunctional purine biosynthesis protein PurH (529 aa).

Positions Met1 to Val148 constitute an MGS-like domain.

The protein belongs to the PurH family.

It catalyses the reaction (6R)-10-formyltetrahydrofolate + 5-amino-1-(5-phospho-beta-D-ribosyl)imidazole-4-carboxamide = 5-formamido-1-(5-phospho-D-ribosyl)imidazole-4-carboxamide + (6S)-5,6,7,8-tetrahydrofolate. It carries out the reaction IMP + H2O = 5-formamido-1-(5-phospho-D-ribosyl)imidazole-4-carboxamide. The protein operates within purine metabolism; IMP biosynthesis via de novo pathway; 5-formamido-1-(5-phospho-D-ribosyl)imidazole-4-carboxamide from 5-amino-1-(5-phospho-D-ribosyl)imidazole-4-carboxamide (10-formyl THF route): step 1/1. It functions in the pathway purine metabolism; IMP biosynthesis via de novo pathway; IMP from 5-formamido-1-(5-phospho-D-ribosyl)imidazole-4-carboxamide: step 1/1. The sequence is that of Bifunctional purine biosynthesis protein PurH from Salmonella newport (strain SL254).